The chain runs to 230 residues: Large ribosomal subunit protein uL1 (230 aa).

It belongs to the universal ribosomal protein uL1 family. As to quaternary structure, part of the 50S ribosomal subunit.

Binds directly to 23S rRNA. The L1 stalk is quite mobile in the ribosome, and is involved in E site tRNA release. In terms of biological role, protein L1 is also a translational repressor protein, it controls the translation of the L11 operon by binding to its mRNA. The sequence is that of Large ribosomal subunit protein uL1 from Limosilactobacillus reuteri subsp. reuteri (strain JCM 1112) (Lactobacillus reuteri).